A 233-amino-acid polypeptide reads, in one-letter code: Probable chemoreceptor glutamine deamidase CheD (233 aa).

It belongs to the CheD family.

The catalysed reaction is L-glutaminyl-[protein] + H2O = L-glutamyl-[protein] + NH4(+). In terms of biological role, probably deamidates glutamine residues to glutamate on methyl-accepting chemotaxis receptors (MCPs), playing an important role in chemotaxis. The chain is Probable chemoreceptor glutamine deamidase CheD from Ralstonia nicotianae (strain ATCC BAA-1114 / GMI1000) (Ralstonia solanacearum).